The sequence spans 899 residues: Bifunctional uridylyltransferase/uridylyl-removing enzyme (899 aa).

Residues 1-342 (MPQVDPDLFD…PGDAAGRVEP (342 aa)) are uridylyltransferase. The tract at residues 343–705 (LNERFQVRDG…TTQREFEGAT (363 aa)) is uridylyl-removing. The 123-residue stretch at 461-583 (VDAHTLNLIK…VRDQTYLDYL (123 aa)) folds into the HD domain. ACT domains follow at residues 706–789 (QIFI…IIQR) and 816–899 (ILEI…RISI).

Belongs to the GlnD family. The cofactor is Mg(2+).

The catalysed reaction is [protein-PII]-L-tyrosine + UTP = [protein-PII]-uridylyl-L-tyrosine + diphosphate. It catalyses the reaction [protein-PII]-uridylyl-L-tyrosine + H2O = [protein-PII]-L-tyrosine + UMP + H(+). Uridylyltransferase (UTase) activity is inhibited by glutamine, while glutamine activates uridylyl-removing (UR) activity. Its function is as follows. Modifies, by uridylylation and deuridylylation, the PII regulatory proteins (GlnB and homologs), in response to the nitrogen status of the cell that GlnD senses through the glutamine level. Under low glutamine levels, catalyzes the conversion of the PII proteins and UTP to PII-UMP and PPi, while under higher glutamine levels, GlnD hydrolyzes PII-UMP to PII and UMP (deuridylylation). Thus, controls uridylylation state and activity of the PII proteins, and plays an important role in the regulation of nitrogen fixation and metabolism. In Azotobacter vinelandii (strain DJ / ATCC BAA-1303), this protein is Bifunctional uridylyltransferase/uridylyl-removing enzyme.